Consider the following 259-residue polypeptide: 5'-nucleotidase SurE (259 aa).

Residues aspartate 11, aspartate 12, serine 42, and asparagine 99 each contribute to the a divalent metal cation site.

It belongs to the SurE nucleotidase family. It depends on a divalent metal cation as a cofactor.

It localises to the cytoplasm. It catalyses the reaction a ribonucleoside 5'-phosphate + H2O = a ribonucleoside + phosphate. Functionally, nucleotidase that shows phosphatase activity on nucleoside 5'-monophosphates. This chain is 5'-nucleotidase SurE, found in Cytophaga hutchinsonii (strain ATCC 33406 / DSM 1761 / CIP 103989 / NBRC 15051 / NCIMB 9469 / D465).